Consider the following 262-residue polypeptide: MNFCSKKKILKQCFFEFLGTGLIIFLGISSLVVSKLTNFHFNHCEISCIWGLGVFISICFCSSVSGAHLNPAITIFLFLSSQFNKKKVIPYILSQISGTFFFTFLIYLIFNNLLNSFESKYNIVRGTKKSLELASLFCVFPKENYNFIHDFILEILIGIIFIIILMKLSEKNNLFKFYKFINPFLIGTLVIIINLFLTSYSNITLNPARDLGPRIFLSLIGWGKLAFTGDDNIIFPYFLIPTIAPIIGINLGGWIYILYIKK.

The Cytoplasmic segment spans residues 1 to 7 (MNFCSKK). Residues 8-36 (KILKQCFFEFLGTGLIIFLGISSLVVSKL) form a helical membrane-spanning segment. The Extracellular portion of the chain corresponds to 37–41 (TNFHF). The helical transmembrane segment at 42–62 (NHCEISCIWGLGVFISICFCS) threads the bilayer. The Cytoplasmic segment spans residues 63-65 (SVS). The stretch at 66-69 (GAHL) is an intramembrane region. Positions 70–72 (NPA) match the NPA 1 motif. An intramembrane region (helical) is located at residues 70-80 (NPAITIFLFLS). At 81–86 (SQFNKK) the chain is on the cytoplasmic side. A helical transmembrane segment spans residues 87 to 110 (KVIPYILSQISGTFFFTFLIYLIF). Topologically, residues 111-145 (NNLLNSFESKYNIVRGTKKSLELASLFCVFPKENY) are extracellular. A helical membrane pass occupies residues 146–171 (NFIHDFILEILIGIIFIIILMKLSEK). The Cytoplasmic portion of the chain corresponds to 172 to 180 (NNLFKFYKF). A helical transmembrane segment spans residues 181 to 197 (INPFLIGTLVIIINLFL). The Extracellular portion of the chain corresponds to 198 to 201 (TSYS). An intramembrane segment occupies 202-205 (NITL). Residues 206 to 208 (NPA) carry the NPA 2 motif. The segment at residues 206–219 (NPARDLGPRIFLSL) is an intramembrane region (helical). Residues 220–234 (IGWGKLAFTGDDNII) lie on the Extracellular side of the membrane. A helical transmembrane segment spans residues 235–259 (FPYFLIPTIAPIIGINLGGWIYILY). At 260–262 (IKK) the chain is on the cytoplasmic side.

This sequence belongs to the MIP/aquaporin (TC 1.A.8) family.

The protein localises to the cell membrane. The enzyme catalyses glycerol(in) = glycerol(out). Its function is as follows. Mediates glycerol diffusion across the cytoplasmic membrane via a pore-type mechanism. The polypeptide is Glycerol uptake facilitator protein (glpF) (Buchnera aphidicola subsp. Schizaphis graminum (strain Sg)).